The following is a 576-amino-acid chain: 4-alpha-glucanotransferase DPE1, chloroplastic/amyloplastic (576 aa).

The transit peptide at methionine 1–arginine 45 directs the protein to the chloroplast.

The protein belongs to the disproportionating enzyme family.

The protein localises to the plastid. It localises to the chloroplast. Its subcellular location is the amyloplast. It catalyses the reaction Transfers a segment of a (1-&gt;4)-alpha-D-glucan to a new position in an acceptor, which may be glucose or a (1-&gt;4)-alpha-D-glucan.. In terms of biological role, chloroplastic alpha-glucanotransferase involved in maltotriose metabolism. Probably uses maltotriose as substrate to transfer a maltosyl unit from one molecule to another, resulting in glucose and maltopentaose. The latter can then be further metabolized to maltose and maltotriose by beta-amylase. Required for normal starch degradation in leaves. The polypeptide is 4-alpha-glucanotransferase DPE1, chloroplastic/amyloplastic (DPE1) (Arabidopsis thaliana (Mouse-ear cress)).